A 182-amino-acid chain; its full sequence is Ribosomal RNA small subunit methyltransferase G (182 aa).

Residues Gly58, Phe63, 109–110 (IE), and Arg123 contribute to the S-adenosyl-L-methionine site.

It belongs to the methyltransferase superfamily. RNA methyltransferase RsmG family.

It localises to the cytoplasm. It carries out the reaction guanosine(527) in 16S rRNA + S-adenosyl-L-methionine = N(7)-methylguanosine(527) in 16S rRNA + S-adenosyl-L-homocysteine. Its function is as follows. Specifically methylates the N7 position of guanine in position 527 of 16S rRNA. This chain is Ribosomal RNA small subunit methyltransferase G, found in Campylobacter fetus subsp. fetus (strain 82-40).